The chain runs to 224 residues: Ribonuclease 3 (224 aa).

Positions 5 to 127 (ANRLQRRLGY…IIGAIYLDSD (123 aa)) constitute an RNase III domain. Glu40 lines the Mg(2+) pocket. Asp44 is a catalytic residue. Mg(2+)-binding residues include Asp113 and Glu116. The active site involves Glu116. A DRBM domain is found at 154 to 224 (DPKTRLQECL…AELALKQLES (71 aa)).

This sequence belongs to the ribonuclease III family. In terms of assembly, homodimer. It depends on Mg(2+) as a cofactor.

It localises to the cytoplasm. The enzyme catalyses Endonucleolytic cleavage to 5'-phosphomonoester.. Its function is as follows. Digests double-stranded RNA. Involved in the processing of primary rRNA transcript to yield the immediate precursors to the large and small rRNAs (23S and 16S). Processes some mRNAs, and tRNAs when they are encoded in the rRNA operon. Processes pre-crRNA and tracrRNA of type II CRISPR loci if present in the organism. In Photobacterium profundum (strain SS9), this protein is Ribonuclease 3.